We begin with the raw amino-acid sequence, 122 residues long: uncharacterized protein (122 aa).

This is an uncharacterized protein from Escherichia coli O157:H7.